Here is a 934-residue protein sequence, read N- to C-terminus: 3-hydroxy-3-methylglutaryl-coenzyme A reductase (934 aa).

Over 1-111 the chain is Lumenal; sequence MFYHGASANQ…VLNLVRGAET (111 aa). The helical transmembrane segment at 112-132 threads the bilayer; sequence FDIALVTCAYIAMFYTLFNLF. The 168-residue stretch at 113-280 folds into the SSD domain; it reads DIALVTCAYI…STFLSAILSL (168 aa). The Cytoplasmic portion of the chain corresponds to 133–141; the sequence is ARMRAVGSK. Residues 142–162 traverse the membrane as a helical segment; sequence VWLGLSTLVSSFFAFLFALYI. The Lumenal segment spans residues 163-168; sequence TTRVLD. Residues 169-189 traverse the membrane as a helical segment; sequence LSIPFLSLSEGIPFFVAVVGF. Over 190-231 the chain is Cytoplasmic; that stretch reads NNKILLAEKVLQNQLNAQSSKNDAPTVLYQALREQGPLLLRD. Residues 232 to 252 form a helical membrane-spanning segment; it reads HLFMITAFLGCSFYASYLDGL. The Lumenal portion of the chain corresponds to 253–256; it reads KNFC. A helical transmembrane segment spans residues 257–277; that stretch reads ILAALILAFDILTTSTFLSAI. At 278–334 the chain is on the cytoplasmic side; the sequence is LSLKLEINQIHRSTLLREQLEDDGLTETTVDDVLKSNSLAGTKTFTDAPSTLVTVAK. A helical transmembrane segment spans residues 335-355; that stretch reads VAGVSVFFGLHFYGFGSAWLS. The Lumenal portion of the chain corresponds to 356–421; the sequence is DLSAGNETND…GLISTAARDK (66 aa). N-linked (GlcNAc...) asparagine glycans are attached at residues Asn361, Asn364, and Asn382. A helical membrane pass occupies residues 422 to 442; sequence YISKFILFAFAVSASINVYLL. At 443–934 the chain is on the cytoplasmic side; sequence NVARIHTTRL…MQHNRAAAKK (492 aa). Glu618 functions as the Charge relay system in the catalytic mechanism. Position 624–630 (624–630) interacts with CoA; it reads SAMRGCK. NADP(+)-binding positions include 685–687 and 712–720; these read SRF and DAMGMNMIS. The active-site Charge relay system is Lys752. Residue 781 to 783 participates in CoA binding; that stretch reads VLK. Asp828 (charge relay system) is an active-site residue. 923-924 lines the CoA pocket; the sequence is SH. His924 acts as the Proton donor in catalysis. 928–929 serves as a coordination point for NADP(+); the sequence is NR.

Belongs to the HMG-CoA reductase family.

The protein localises to the endoplasmic reticulum membrane. It catalyses the reaction (R)-mevalonate + 2 NADP(+) + CoA = (3S)-3-hydroxy-3-methylglutaryl-CoA + 2 NADPH + 2 H(+). The protein operates within metabolic intermediate biosynthesis; (R)-mevalonate biosynthesis; (R)-mevalonate from acetyl-CoA: step 3/3. Functionally, HMG-CoA reductase; part of the first module of ergosterol biosynthesis pathway that includes the early steps of the pathway, conserved across all eukaryotes, and which results in the formation of mevalonate from acetyl-coenzyme A (acetyl-CoA). In this module, the cytosolic acetyl-CoA acetyltransferase catalyzes the formation of acetoacetyl-CoA. The hydroxymethylglutaryl-CoA synthase then condenses acetyl-CoA with acetoacetyl-CoA to form HMG-CoA. The rate-limiting step of the early module is the reduction to mevalonate by the 3-hydroxy-3-methylglutaryl-coenzyme A (HMG-CoA) reductase. The protein is 3-hydroxy-3-methylglutaryl-coenzyme A reductase of Cyberlindnera jadinii (Torula yeast).